The primary structure comprises 514 residues: ATP synthase subunit alpha (514 aa).

169–176 lines the ATP pocket; that stretch reads GDRQTGKT.

The protein belongs to the ATPase alpha/beta chains family. As to quaternary structure, F-type ATPases have 2 components, CF(1) - the catalytic core - and CF(0) - the membrane proton channel. CF(1) has five subunits: alpha(3), beta(3), gamma(1), delta(1), epsilon(1). CF(0) has three main subunits: a(1), b(2) and c(9-12). The alpha and beta chains form an alternating ring which encloses part of the gamma chain. CF(1) is attached to CF(0) by a central stalk formed by the gamma and epsilon chains, while a peripheral stalk is formed by the delta and b chains.

It localises to the cell membrane. It catalyses the reaction ATP + H2O + 4 H(+)(in) = ADP + phosphate + 5 H(+)(out). In terms of biological role, produces ATP from ADP in the presence of a proton gradient across the membrane. The alpha chain is a regulatory subunit. The polypeptide is ATP synthase subunit alpha (Buchnera aphidicola subsp. Baizongia pistaciae (strain Bp)).